We begin with the raw amino-acid sequence, 907 residues long: Protein translocase subunit SecA (907 aa).

ATP-binding positions include Q86, 104-108 (GEGKT), and D511. Basic and acidic residues-rich tracts occupy residues 838–856 (AQEE…HESV) and 869–888 (EEAP…KRND). Positions 838 to 907 (AQEEWKESMS…YKQCHGKVVD (70 aa)) are disordered. Residues C890, C892, C901, and H902 each contribute to the Zn(2+) site. A compositionally biased stretch (basic residues) spans 896–907 (KKYKQCHGKVVD).

It belongs to the SecA family. In terms of assembly, monomer and homodimer. Part of the essential Sec protein translocation apparatus which comprises SecA, SecYEG and auxiliary proteins SecDF-YajC and YidC. Zn(2+) is required as a cofactor.

The protein localises to the cell inner membrane. It localises to the cytoplasm. The enzyme catalyses ATP + H2O + cellular proteinSide 1 = ADP + phosphate + cellular proteinSide 2.. Functionally, part of the Sec protein translocase complex. Interacts with the SecYEG preprotein conducting channel. Has a central role in coupling the hydrolysis of ATP to the transfer of proteins into and across the cell membrane, serving both as a receptor for the preprotein-SecB complex and as an ATP-driven molecular motor driving the stepwise translocation of polypeptide chains across the membrane. The chain is Protein translocase subunit SecA from Francisella philomiragia subsp. philomiragia (strain ATCC 25017 / CCUG 19701 / FSC 153 / O#319-036).